Here is a 196-residue protein sequence, read N- to C-terminus: UPF0319 protein VV0948 (196 aa).

An N-terminal signal peptide occupies residues 1–19 (MKKMMILSALALFSSSLFA).

Belongs to the UPF0319 family.

The protein is UPF0319 protein VV0948 of Vibrio vulnificus (strain YJ016).